The sequence spans 95 residues: Large ribosomal subunit protein bL25 (95 aa).

Belongs to the bacterial ribosomal protein bL25 family. As to quaternary structure, part of the 50S ribosomal subunit; part of the 5S rRNA/L5/L18/L25 subcomplex. Contacts the 5S rRNA. Binds to the 5S rRNA independently of L5 and L18.

Functionally, this is one of the proteins that binds to the 5S RNA in the ribosome where it forms part of the central protuberance. This Shewanella putrefaciens (strain CN-32 / ATCC BAA-453) protein is Large ribosomal subunit protein bL25.